Reading from the N-terminus, the 1708-residue chain is MTGAPPYNPQSPTQQPRFPVYSPPNKNRSYYPNNDQYQQHAPQTPPAFAPQPSLSRSPHYSHAPSPLPATLPPLNGGAPPPGHHPEPSSQYQTHSSAGTPQFSLPRPYSASMMSSNGASSYNHSTASHAHPSARLESLSQSPPKKETEPLYPIGGNGAPGYSSSMMREPRPASPPRETKHARAADPMSFASILSGPTEETSPIKQPSLPEALPGPATTITPAPPTLAPVPARRRLTPPPVTHALPPTSQLKVKEPEPISPAALPRLEKKPSAEKRRRNVEQEPKSAEALPVASTHGAFEPTKAARVSNRKTLTERDAEAINKIIAEIDNADKSDVESPGFEVEYGRYMVKSKKRALDAEKAEGIRRKRRRHDFLVKLGKTFEKQANAGVDRFRAANEASVIAEVQAKEIQDEKERKKDMQRKRRRENTVRLEMQKKLEAERKANKANDAAEKAKFLREAERAQRKIKSTKRALEGVTSPEEIGEVTPLAPNLEGGTTSSFHIGRSSPSRRKSGRSGTSRPKKSKEQKQAEKDAAEAAYAAMENDEPLPLAPKEDPRKETVKKEAKGARSKETTPAPVSAFESKGYNQIYEQIWRDIARKDIPKVYRIKTLSLSTRQENLRKTAQLASKQSRKWQERTNKSMKDTQARAKRTMREMMSFWKRNEREERDLRRLAEKQEIESAKKAEAEREANRQKRKLNFLISQTELYSHFIGRKIKGAGADSSGDTAVDGSDETIQPGKADHTIDLPPTVADVGAKVTNFEDLDFDAEDETALRQAALANAQNAVKEAQERARAFNAEENPMAALDEGELNFQNPTSLGDIEISQPKMLTAKLKEYQLKGLNWLVNLYEQGINGILADEMGLGKTIQSISVMAYLAEVHNIWGPFLVIAPASTLHNWQQEITKFVPDIKVLPYWGSAKDRKVLRKFWDRKHITYTKESEFHVLVTSYQLVVLDSQYFQKVKWQYMILDEAQAIKSSQSSRWKNLLGFHCRNRLLLTGTPIQNNMQELWALLHFIMPTLFDSHDEFSEWFSKDIESHAQSNTKLNEDQLRRLHMILKPFMLRRVKKHVQQELGDKVEKDVFCDLTYRQRAYYTNLRNRVSIMDLIEKAAVGDEADSTTLMNLVMQFRKVCNHPDLFERAETKSPFSVGYFAETASFVREGQNVDVRYSTRNLIEYNLPRLLCSPSGRIDMAGPGNEHAGFRGKYLQHLMNIFTPENIKRSIDEDGAFSFLRFADTSINEAYEQSHLGVFERAVRRRGQSNRLSHLNVIYDDEEDEKTSKFVLPHSLFNIVQRNDRQAVRNVTVEGYMRDLMNVSEATFERDGLGVIEPSASPAASAPPITISCSGQVALRETQDTFFNVSVRHALFSTPSRQMEQQILEKKLDPAPFSLPPMLPKPISTKGRYTHIEVPSMRRFVTDSGKLAKLDELLRELKAGGHRVLLYFQMTRMIDLMEEYLTYRNYKYCRLDGSTKLEDRRDTVADFQQRPEIFVFLLSTRAGGLGINLTAADTVIFYDSDWNPTIDSQAMDRAHRLGQTRQVTVYRLITRGTIEERIRKRALQKEEVQRVVISGGAAGGVDFNTRNRESRTKDIAMWLADDEQAELIEQKEKEALDRGEVFGAGKGGKKAAQKRKKDLTLDDMYHEGEGNFDDISAKPSGAATPVSTADNFGTPSSTPVPKRGRGRGNGKGSSKRAKTTTERLRLIDGDGGLES.

Disordered regions lie at residues 1 to 312 (MTGA…RKTL), 408 to 581 (EIQD…SAFE), 626 to 648 (ASKQ…QARA), and 718 to 747 (AGAD…IDLP). Polar residues-rich tracts occupy residues 24–37 (PNKN…NDQY) and 88–102 (SSQY…TPQF). 2 stretches are compositionally biased toward low complexity: residues 108-122 (YSAS…SSYN) and 211-220 (ALPGPATTIT). Basic and acidic residues-rich tracts occupy residues 265-285 (RLEK…EPKS), 408-417 (EIQDEKERKK), and 426-463 (ENTV…ERAQ). Positions 395–478 (ANEASVIAEV…TKRALEGVTS (84 aa)) form a coiled coil. Residues 507 to 522 (PSRRKSGRSGTSRPKK) are compositionally biased toward basic residues. Basic and acidic residues-rich tracts occupy residues 523 to 534 (SKEQKQAEKDAA), 551 to 571 (PKED…RSKE), and 632 to 646 (KWQE…DTQA). A DBINO domain is found at 592–717 (IWRDIARKDI…SHFIGRKIKG (126 aa)). The stretch at 634 to 706 (QERTNKSMKD…LNFLISQTEL (73 aa)) forms a coiled coil. One can recognise a Helicase ATP-binding domain in the interval 845-1017 (VNLYEQGING…WALLHFIMPT (173 aa)). 858–865 (DEMGLGKT) is a binding site for ATP. Positions 968 to 971 (DEAQ) match the DEAQ box motif. Residues 1422–1582 (KLDELLRELK…GVDFNTRNRE (161 aa)) enclose the Helicase C-terminal domain. Residues 1643 to 1708 (GNFDDISAKP…LIDGDGGLES (66 aa)) are disordered. The span at 1658 to 1672 (PVSTADNFGTPSSTP) shows a compositional bias: polar residues. Positions 1675–1691 (KRGRGRGNGKGSSKRAK) are enriched in basic residues. Basic and acidic residues predominate over residues 1692 to 1701 (TTTERLRLID).

Belongs to the SNF2/RAD54 helicase family. As to quaternary structure, component of the INO80 chromatin-remodeling complex.

Its subcellular location is the nucleus. It catalyses the reaction ATP + H2O = ADP + phosphate + H(+). Functionally, ATPase component of the INO80 complex which remodels chromatin by shifting nucleosomes and is involved in DNA repair. The protein is Chromatin-remodeling ATPase INO80 (ino80) of Aspergillus fumigatus (strain ATCC MYA-4609 / CBS 101355 / FGSC A1100 / Af293) (Neosartorya fumigata).